The following is a 317-amino-acid chain: tRNA pseudouridine synthase B (317 aa).

D47 functions as the Nucleophile in the catalytic mechanism.

The protein belongs to the pseudouridine synthase TruB family. Type 1 subfamily.

It carries out the reaction uridine(55) in tRNA = pseudouridine(55) in tRNA. Responsible for synthesis of pseudouridine from uracil-55 in the psi GC loop of transfer RNAs. The protein is tRNA pseudouridine synthase B of Shewanella woodyi (strain ATCC 51908 / MS32).